The sequence spans 532 residues: Berberine bridge enzyme-like 18 (532 aa).

A signal peptide spans 1–29 (MKFQSFFSSVLIFFTTSTLLLSIPHPVSA). N30, N33, N46, N59, N147, N169, and N262 each carry an N-linked (GlcNAc...) asparagine glycan. The cysteines at positions 40 and 102 are disulfide-linked. The 175-residue stretch at 80–254 (DVPKPVLILT…LSWKIGLINV (175 aa)) folds into the FAD-binding PCMH-type domain. Positions 117-179 (HDYEGLSYVT…RTLAFPAGVC (63 aa)) form a cross-link, 6-(S-cysteinyl)-8alpha-(pros-histidyl)-FAD (His-Cys).

This sequence belongs to the oxygen-dependent FAD-linked oxidoreductase family. FAD is required as a cofactor. The FAD cofactor is bound via a bicovalent 6-S-cysteinyl, 8alpha-N1-histidyl FAD linkage.

The protein resides in the secreted. The protein localises to the cell wall. The sequence is that of Berberine bridge enzyme-like 18 from Arabidopsis thaliana (Mouse-ear cress).